A 92-amino-acid polypeptide reads, in one-letter code: RQC P-site tRNA stabilizing factor (92 aa).

Positions methionine 5 to glutamate 65 constitute an S4 RNA-binding domain.

This sequence belongs to the RqcP family. As to quaternary structure, associates with stalled 50S ribosomal subunits. Binds to RqcH, 23S rRNA and the P-site tRNA. Does not require RqcH for association with 50S subunits.

Its function is as follows. Key component of the ribosome quality control system (RQC), a ribosome-associated complex that mediates the extraction of incompletely synthesized nascent chains from stalled ribosomes and their subsequent degradation. RqcH recruits Ala-charged tRNA, and with RqcP directs the elongation of stalled nascent chains on 50S ribosomal subunits, leading to non-templated C-terminal alanine extensions (Ala tail). The Ala tail promotes nascent chain degradation. RqcP is associated with the translocation-like movement of the peptidyl-tRNA from the A-site into the P-site. This is RQC P-site tRNA stabilizing factor from Listeria innocua serovar 6a (strain ATCC BAA-680 / CLIP 11262).